The chain runs to 195 residues: Peptidyl-tRNA hydrolase (195 aa).

Y17 provides a ligand contact to tRNA. The Proton acceptor role is filled by H22. 3 residues coordinate tRNA: Y68, N70, and N116.

This sequence belongs to the PTH family. As to quaternary structure, monomer.

It is found in the cytoplasm. The catalysed reaction is an N-acyl-L-alpha-aminoacyl-tRNA + H2O = an N-acyl-L-amino acid + a tRNA + H(+). Functionally, hydrolyzes ribosome-free peptidyl-tRNAs (with 1 or more amino acids incorporated), which drop off the ribosome during protein synthesis, or as a result of ribosome stalling. In terms of biological role, catalyzes the release of premature peptidyl moieties from peptidyl-tRNA molecules trapped in stalled 50S ribosomal subunits, and thus maintains levels of free tRNAs and 50S ribosomes. The protein is Peptidyl-tRNA hydrolase of Shewanella oneidensis (strain ATCC 700550 / JCM 31522 / CIP 106686 / LMG 19005 / NCIMB 14063 / MR-1).